The chain runs to 22 residues: Magnificalysin II (22 aa).

The plays an important role in the hemolytic activity stretch occupies residues 3–12; the sequence is ALAGTIIDGA. The segment at 11–22 is N-terminal region; it reads GASLGFDILNKV.

It belongs to the actinoporin family. Sea anemone subfamily. As to quaternary structure, octamer or nonamer in membranes. Monomer in the soluble state.

The protein resides in the secreted. It localises to the nematocyst. It is found in the target cell membrane. Functionally, pore-forming protein that forms cations-selective hydrophilic pores of around 1 nm and causes cytolysis. Pore formation is a multi-step process that involves specific recognition of membrane sphingomyelin (but neither cholesterol nor phosphatidylcholine) using aromatic rich region and adjacent phosphocholine (POC) binding site, firm binding to the membrane (mainly driven by hydrophobic interactions) accompanied by the transfer of the N-terminal region to the lipid-water interface and finally pore formation after oligomerization of monomers. The chain is Magnificalysin II from Heteractis magnifica (Magnificent sea anemone).